Reading from the N-terminus, the 433-residue chain is Probable glycine dehydrogenase (decarboxylating) subunit 1 (433 aa).

It belongs to the GcvP family. N-terminal subunit subfamily. In terms of assembly, the glycine cleavage system is composed of four proteins: P, T, L and H. In this organism, the P 'protein' is a heterodimer of two subunits.

It carries out the reaction N(6)-[(R)-lipoyl]-L-lysyl-[glycine-cleavage complex H protein] + glycine + H(+) = N(6)-[(R)-S(8)-aminomethyldihydrolipoyl]-L-lysyl-[glycine-cleavage complex H protein] + CO2. Functionally, the glycine cleavage system catalyzes the degradation of glycine. The P protein binds the alpha-amino group of glycine through its pyridoxal phosphate cofactor; CO(2) is released and the remaining methylamine moiety is then transferred to the lipoamide cofactor of the H protein. This is Probable glycine dehydrogenase (decarboxylating) subunit 1 from Thermoplasma acidophilum (strain ATCC 25905 / DSM 1728 / JCM 9062 / NBRC 15155 / AMRC-C165).